Consider the following 233-residue polypeptide: Large ribosomal subunit protein uL1 (233 aa).

Belongs to the universal ribosomal protein uL1 family. In terms of assembly, part of the 50S ribosomal subunit.

In terms of biological role, binds directly to 23S rRNA. The L1 stalk is quite mobile in the ribosome, and is involved in E site tRNA release. Functionally, protein L1 is also a translational repressor protein, it controls the translation of the L11 operon by binding to its mRNA. This is Large ribosomal subunit protein uL1 from Deinococcus geothermalis (strain DSM 11300 / CIP 105573 / AG-3a).